A 274-amino-acid polypeptide reads, in one-letter code: Long chain fatty acid elongase 2 (274 aa).

7 helical membrane passes run 29–49 (MSTFVPLSYKIMIGYLVTIYF), 73–93 (FSLFSGIAAYKLIPELFGVFM), 115–135 (FWGWAFVMSKAPELGDTMFLV), 140–160 (PVIFMHWYHHALTFVYAVVTY), 170–190 (SLALNLAVHTVMYFYFAVRAL), 201–221 (FITTIQIVQFVISCYIFGHLV), and 238–258 (VLSIGGLMYISYLFLFAKFFY).

The protein belongs to the ELO family. As to expression, expressed in various tissues and parts of the body, including the ventral cord, pharyngeal muscles, uterus, and the tail, and most strongly in intestinal cells.

It is found in the membrane. It carries out the reaction hexadecanoyl-CoA + malonyl-CoA + H(+) = 3-oxooctadecanoyl-CoA + CO2 + CoA. Its pathway is lipid metabolism; fatty acid biosynthesis. Functionally, catalyzes the first and rate-limiting reaction of the four reactions that constitute the long-chain fatty acids elongation cycle. Uses malonyl-CoA to add 2 carbons per cycle to the chain of long-chain fatty acids. Condensing enzyme responsible for the elongation of palmitate (hexadecanoate, 16:0), also involved in polyunsaturated fatty acid (PUFA) biosynthesis. The sequence is that of Long chain fatty acid elongase 2 from Caenorhabditis elegans.